Reading from the N-terminus, the 205-residue chain is High frequency lysogenization protein HflD homolog (205 aa).

The protein belongs to the HflD family.

The protein localises to the cytoplasm. It is found in the cell inner membrane. The protein is High frequency lysogenization protein HflD homolog of Aliivibrio fischeri (strain MJ11) (Vibrio fischeri).